We begin with the raw amino-acid sequence, 762 residues long: ABC-type oligopeptide transporter ABCB9 (762 aa).

Transmembrane regions (helical) follow at residues 7–27 (VVVTLAFVSMDVGVTTAIYAF), 47–67 (VLDLWAACLYRSCLLLGATIG), 84–104 (LVITLVCLFVGIYAMAKLLLF), 116–136 (FWALFVWTYISLAASFLLWGL), 181–201 (VAFLVAASFFLIVAALGETFL), 221–241 (FTTAVVVVCLLAIGSSLAAGI), 315–335 (VFMFSLSWQLSLVTFMGFPII), and 412–432 (SGLTLLVVQVSILYYGGHLVI). The 284-residue stretch at 184–467 (LVAASFFLIV…VGSVYSGLMQ (284 aa)) folds into the ABC transmembrane type-1 domain. Residues 500–736 (VDFENVTFTY…GGLYAKLVQR (237 aa)) form the ABC transporter domain. 535 to 542 (GPSGSGKS) contributes to the ATP binding site.

This sequence belongs to the ABC transporter superfamily. ABCB family. MHC peptide exporter (TC 3.A.1.209) subfamily. As to quaternary structure, homodimer. Interacts (via TMD0 region) with LAMP1; this interaction strongly stabilizes ABCB9 and protects ABCB9 against lysosomal degradation. Interacts (via TMD0 region) with LAMP2 (isoform LAMP-2B). Interacts (via TMD0) with YIF1B; this interaction allows (but is not essential) the ER-to-Golgi trafficking and strongly depends on a salt bridge within TMD0. In terms of tissue distribution, found in testis, particularly in the Sertoli cells of the seminiferous tubules. Also expressed in kidney, brain, heart, lung, spleen, thymus, intestine and testis. Higher expression detected in brain and testis than in thymus and intestine.

It localises to the lysosome membrane. It catalyses the reaction a [oligopeptide](in) + ATP + H2O = a [oligopeptide](out) + ADP + phosphate + H(+). Its function is as follows. ATP-dependent low-affinity peptide transporter which translocates a broad spectrum of peptides from the cytosol to the lysosomal lumen for degradation. Displays a broad peptide length specificity from 6-mer up to at least 59-mer peptides with an optimum of 23-mers. Binds and transports smaller and larger peptides with the same affinity. Favors positively charged, aromatic or hydrophobic residues in the N- and C-terminal positions whereas negatively charged residues as well as asparagine and methionine are not favored. This is ABC-type oligopeptide transporter ABCB9 from Rattus norvegicus (Rat).